The sequence spans 257 residues: Insulin-induced gene 1 protein (257 aa).

The Cytoplasmic segment spans residues 1–64 (MPRLHDHVWS…ARPGSWHHDL (64 aa)). The tract at residues 32-54 (CPQGSGAPEPAPRSPRAGTAGCG) is disordered. A helical transmembrane segment spans residues 65 to 87 (VQRSLVLFSFGVVLALVLNLLQI). Over 88 to 106 (QRNVTLFPDEVIATIFSSA) the chain is Extracellular. The helical transmembrane segment at 107–124 (WWVPPCCGTAAAVVGLLY) threads the bilayer. At 125 to 139 (PCIDSHLGEPHKFKR) the chain is on the cytoplasmic side. Residues K136 and K138 each participate in a glycyl lysine isopeptide (Lys-Gly) (interchain with G-Cter in ubiquitin) cross-link. The chain crosses the membrane as a helical span at residues 140–162 (EWASVMRCIAVFVGINHASAKLD). At 163 to 165 (FAN) the chain is on the extracellular side. A helical transmembrane segment spans residues 166-184 (NVQLSLTLAALSLGLWWTF). The Cytoplasmic segment spans residues 185–189 (DRSRS). S187 carries the post-translational modification Phosphoserine. A helical membrane pass occupies residues 190–211 (GLGLGITIAFLATLITQFLVYN). The Extracellular segment spans residues 212-225 (GVYQYTSPDFLYIR). The chain crosses the membrane as a helical span at residues 226-243 (SWLPCIFFSGGVTVGNIG). The Cytoplasmic portion of the chain corresponds to 244–257 (RQLAMGVPEKPHSD). A KxHxx motif is present at residues 251 to 257 (PEKPHSD).

This sequence belongs to the INSIG family. In terms of assembly, interacts with SCAP; interaction is direct and only takes place in the presence of sterols; it prevents interaction between SCAP and the coat protein complex II (COPII). Associates with the SCAP-SREBP complex (composed of SCAP and SREBF1/SREBP1 or SREBF2/SREBP2); association is mediated via its interaction with SCAP and only takes place in the presence of sterols. Interaction with SCAP is mutually exclusive with PAQR3. Interacts with HMGCR (via its SSD); the interaction, accelerated by sterols, leads to the recruitment of HMGCR to AMFR/gp78 for its ubiquitination by the sterol-mediated ERAD pathway. Interacts with AMFR/gp78 (via its membrane domain); the interaction recruits HMCR at the ER membrane for its ubiquitination and degradation by the sterol-mediated ERAD pathway. Interacts with SOAT2/ACAT2; leading to promote recruitment of AMFR/gp78 and subsequent ubiquitination of SOAT2/ACAT2. Interacts with RNF139. Interacts with RNF145. Post-translationally, phosphorylation at Ser-187 by PCK1 reduces binding to oxysterol, disrupting the interaction between INSIG1 and SCAP, thereby promoting nuclear translocation of SREBP proteins (SREBF1/SREBP1 or SREBF2/SREBP2) and subsequent transcription of downstream lipogenesis-related genes. Ubiquitinated by AMFR/gp78 in response to sterol deprivation, leading to its degradation: when the SCAP-SREBP complex becomes dissociated from INSIG1, INSIG1 is then ubiquitinated and degraded in proteasomes. Although ubiquitination is required for rapid INSIG1 degradation, it is not required for release of the SCAP-SREBP complex. Ubiquitinated by RNF139.

Its subcellular location is the endoplasmic reticulum membrane. Oxysterol-binding protein that mediates feedback control of cholesterol synthesis by controlling both endoplasmic reticulum to Golgi transport of SCAP and degradation of HMGCR. Acts as a negative regulator of cholesterol biosynthesis by mediating the retention of the SCAP-SREBP complex in the endoplasmic reticulum, thereby blocking the processing of sterol regulatory element-binding proteins (SREBPs) SREBF1/SREBP1 and SREBF2/SREBP2. Binds oxysterol, including 25-hydroxycholesterol, regulating interaction with SCAP and retention of the SCAP-SREBP complex in the endoplasmic reticulum. In presence of oxysterol, interacts with SCAP, retaining the SCAP-SREBP complex in the endoplasmic reticulum, thereby preventing SCAP from escorting SREBF1/SREBP1 and SREBF2/SREBP2 to the Golgi. Sterol deprivation or phosphorylation by PCK1 reduce oxysterol-binding, disrupting the interaction between INSIG1 and SCAP, thereby promoting Golgi transport of the SCAP-SREBP complex, followed by processing and nuclear translocation of SREBF1/SREBP1 and SREBF2/SREBP2. Also regulates cholesterol synthesis by regulating degradation of HMGCR: initiates the sterol-mediated ubiquitin-mediated endoplasmic reticulum-associated degradation (ERAD) of HMGCR via recruitment of the reductase to the ubiquitin ligases AMFR/gp78 and/or RNF139. Also regulates degradation of SOAT2/ACAT2 when the lipid levels are low: initiates the ubiquitin-mediated degradation of SOAT2/ACAT2 via recruitment of the ubiquitin ligases AMFR/gp78. In Cricetulus griseus (Chinese hamster), this protein is Insulin-induced gene 1 protein.